The primary structure comprises 74 residues: Mu-Sparatoxin-Hp2 (74 aa).

The N-terminal stretch at 1–20 is a signal peptide; it reads MKIIVLMMMLFAAFSAVVLA. A propeptide spanning residues 21 to 35 is cleaved from the precursor; it reads DKSIEDAALDTVMDR. 3 disulfides stabilise this stretch: Cys42–Cys57, Cys49–Cys62, and Cys56–Cys66. Position 73 is a leucine amide (Leu73).

Expressed by the venom gland.

It is found in the secreted. In terms of biological role, weakly nhibits voltage-gated sodium channels Nav1.7/SCN9A. High concentration of the toxin (3 uM) inhibits Nav1.7/SCN9A currents by 80%. This chain is Mu-Sparatoxin-Hp2, found in Heteropoda pingtungensis (Pingtung huntsman spider).